Reading from the N-terminus, the 251-residue chain is Ribosomal RNA small subunit methyltransferase J (251 aa).

S-adenosyl-L-methionine is bound by residues 100–101, 116–117, and D170; these read RD and ER.

The protein belongs to the methyltransferase superfamily. RsmJ family.

The protein localises to the cytoplasm. It catalyses the reaction guanosine(1516) in 16S rRNA + S-adenosyl-L-methionine = N(2)-methylguanosine(1516) in 16S rRNA + S-adenosyl-L-homocysteine + H(+). In terms of biological role, specifically methylates the guanosine in position 1516 of 16S rRNA. The chain is Ribosomal RNA small subunit methyltransferase J from Actinobacillus pleuropneumoniae serotype 5b (strain L20).